We begin with the raw amino-acid sequence, 271 residues long: Indole-3-glycerol phosphate synthase (271 aa).

It belongs to the TrpC family.

The catalysed reaction is 1-(2-carboxyphenylamino)-1-deoxy-D-ribulose 5-phosphate + H(+) = (1S,2R)-1-C-(indol-3-yl)glycerol 3-phosphate + CO2 + H2O. It participates in amino-acid biosynthesis; L-tryptophan biosynthesis; L-tryptophan from chorismate: step 4/5. This Lachnoclostridium phytofermentans (strain ATCC 700394 / DSM 18823 / ISDg) (Clostridium phytofermentans) protein is Indole-3-glycerol phosphate synthase.